Reading from the N-terminus, the 203-residue chain is MLALTFAMSGIAYLLGSVSNAVLISRLCDLPDPREYGSHNPGATNVLRSGNRLAALIVFLLDMLKGTIPVYLAWYLGIPPLYLGFIGIAACLGHMYPLYFHFRGGKGVATALGALLPLGLDMGSFMIVTWLIVLLFTGYSSLAAIGAALLAPLYTYCLKPEYTLPVAMLCCLIILRHHENISRLLQGHEPQVWSRHPLKRHRR.

4 helical membrane-spanning segments follow: residues 4–24 (LTFA…AVLI), 68–88 (IPVY…FIGI), 104–124 (GGKG…DMGS), and 125–145 (FMIV…LAAI).

The protein belongs to the PlsY family. As to quaternary structure, probably interacts with PlsX.

The protein localises to the cell inner membrane. The catalysed reaction is an acyl phosphate + sn-glycerol 3-phosphate = a 1-acyl-sn-glycero-3-phosphate + phosphate. Its pathway is lipid metabolism; phospholipid metabolism. In terms of biological role, catalyzes the transfer of an acyl group from acyl-phosphate (acyl-PO(4)) to glycerol-3-phosphate (G3P) to form lysophosphatidic acid (LPA). This enzyme utilizes acyl-phosphate as fatty acyl donor, but not acyl-CoA or acyl-ACP. The sequence is that of Glycerol-3-phosphate acyltransferase from Tolumonas auensis (strain DSM 9187 / NBRC 110442 / TA 4).